A 460-amino-acid chain; its full sequence is 2-methylcitrate synthase, mitochondrial (460 aa).

The N-terminal 24 residues, 1-24 (MALPLRTARHASRLAQTIGRRGYA), are a transit peptide targeting the mitochondrion. Residues R69 and K187 each contribute to the CoA site. H264 contacts oxaloacetate. Residue L299 coordinates CoA. Residue H300 is part of the active site. CoA-binding residues include V341, G343, and Y344. Oxaloacetate-binding residues include H346 and R355. The active site involves H346. Positions 395, 396, and 401 each coordinate CoA. D403 is an active-site residue. Residues R429 and R449 each contribute to the oxaloacetate site.

This sequence belongs to the citrate synthase family. As to quaternary structure, homodimer.

The protein resides in the mitochondrion matrix. The enzyme catalyses propanoyl-CoA + oxaloacetate + H2O = (2S,3S)-2-methylcitrate + CoA + H(+). It carries out the reaction oxaloacetate + acetyl-CoA + H2O = citrate + CoA + H(+). It functions in the pathway organic acid metabolism; propanoate degradation. Partially inhibited by ATP. In terms of biological role, catalyzes the synthesis of (2S,3S)-2-methylcitrate from propionyl-CoA and oxaloacetate and also from acetyl-CoA and oxaloacetate with a greater efficiency. Also has citrate synthase activity and can substitute for the loss of citA activity. The sequence is that of 2-methylcitrate synthase, mitochondrial from Emericella nidulans (strain FGSC A4 / ATCC 38163 / CBS 112.46 / NRRL 194 / M139) (Aspergillus nidulans).